Consider the following 207-residue polypeptide: Large ribosomal subunit protein bL25 (207 aa).

The protein belongs to the bacterial ribosomal protein bL25 family. CTC subfamily. As to quaternary structure, part of the 50S ribosomal subunit; part of the 5S rRNA/L5/L18/L25 subcomplex. Contacts the 5S rRNA. Binds to the 5S rRNA independently of L5 and L18.

Functionally, this is one of the proteins that binds to the 5S RNA in the ribosome where it forms part of the central protuberance. The polypeptide is Large ribosomal subunit protein bL25 (Bordetella petrii (strain ATCC BAA-461 / DSM 12804 / CCUG 43448)).